The chain runs to 159 residues: Ribosome maturation factor RimP (159 aa).

The protein belongs to the RimP family.

It is found in the cytoplasm. In terms of biological role, required for maturation of 30S ribosomal subunits. The sequence is that of Ribosome maturation factor RimP from Streptococcus pneumoniae (strain 70585).